The primary structure comprises 149 residues: UPF0260 protein PSPTO_3918 (149 aa).

This sequence belongs to the UPF0260 family.

The protein is UPF0260 protein PSPTO_3918 of Pseudomonas syringae pv. tomato (strain ATCC BAA-871 / DC3000).